Here is a 339-residue protein sequence, read N- to C-terminus: Nitrilase (339 aa).

The 271-residue stretch at 7-277 folds into the CN hydrolase domain; that stretch reads YRVAAVQASP…EGITYADIDL (271 aa). The active-site Proton acceptor is E47. K128 acts as the Proton donor in catalysis. Catalysis depends on C162, which acts as the Nucleophile.

It belongs to the carbon-nitrogen hydrolase superfamily. Nitrilase family.

The enzyme catalyses a nitrile + 2 H2O = a carboxylate + NH4(+). The chain is Nitrilase (nit) from Bacillus sp. (strain OxB-1).